A 495-amino-acid chain; its full sequence is Membrane-bound glycerophospholipid O-acyltransferase 1 (495 aa).

The next 6 membrane-spanning stretches (helical) occupy residues Val34–Leu54, Ile70–Leu90, Ile126–Thr146, Pro180–Cys200, Thr238–Leu258, and Tyr297–Val317. Active-site residues include Asn350 and His381. A run of 3 helical transmembrane segments spans residues Val371–Phe391, Thr426–Val446, and Ile450–Phe470. Ser488 bears the Phosphoserine mark.

The protein belongs to the membrane-bound acyltransferase family. As to expression, expressed in neutrophils.

Its subcellular location is the endoplasmic reticulum membrane. The catalysed reaction is a 1-acyl-sn-glycero-3-phospho-L-serine + an acyl-CoA = a 1,2-diacyl-sn-glycero-3-phospho-L-serine + CoA. The enzyme catalyses a 1-acyl-sn-glycero-3-phosphocholine + an acyl-CoA = a 1,2-diacyl-sn-glycero-3-phosphocholine + CoA. It carries out the reaction a 1-acyl-sn-glycero-3-phosphoethanolamine + an acyl-CoA = a 1,2-diacyl-sn-glycero-3-phosphoethanolamine + CoA. It catalyses the reaction 1-(9Z-octadecenoyl)-sn-glycero-3-phospho-L-serine + (9Z)-octadecenoyl-CoA = 1,2-di-(9Z)-octadecenoyl-sn-glycero-3-phospho-L-serine + CoA. The catalysed reaction is 1-(9Z-octadecenoyl)-sn-glycero-3-phospho-L-serine + octadecanoyl-CoA = 1-(9Z-octadecenoyl)-2-octadecanoyl-sn-glycero-3-phospho-L-serine + CoA. The enzyme catalyses 1-(9Z-octadecenoyl)-sn-glycero-3-phospho-L-serine + (9Z)-hexadecenoyl-CoA = 1-(9Z-octadecenoyl)-2-(9Z-hexadecenoyl)-sn-glycero-3-phospho-L-serine + CoA. It carries out the reaction 1-(9Z-octadecenoyl)-sn-glycero-3-phospho-L-serine + (9Z,12Z)-octadecadienoyl-CoA = 1-(9Z-octadecenoyl)-2-(9Z,12Z-octadienoyl)-sn-glycero-3-phospho-L-serine + CoA. It catalyses the reaction 1-hexadecanoyl-sn-glycero-3-phosphocholine + (9Z)-octadecenoyl-CoA = 1-hexadecanoyl-2-(9Z-octadecenoyl)-sn-glycero-3-phosphocholine + CoA. The catalysed reaction is a 1-O-(1Z-alkenyl)-sn-glycero-3-phosphoethanolamine + (9Z)-octadecenoyl-CoA = 1-O-(1Z)-alkenyl-2-(9Z)-octadecenoyl-sn-glycero-3-phosphoethanolamine + CoA. The enzyme catalyses 1-octadecanoyl-sn-glycero-3-phosphoethanolamine + (9Z)-octadecenoyl-CoA = 1-octadecanoyl-2-(9Z-octadecenoyl)-sn-glycero-3-phosphoethanolamine + CoA. It carries out the reaction 1-(9Z-octadecenoyl)-sn-glycero-3-phosphoethanolamine + (9Z)-octadecenoyl-CoA = 1,2-di-(9Z-octadecenoyl)-sn-glycero-3-phosphoethanolamine + CoA. It catalyses the reaction 1-hexadecanoyl-sn-glycero-3-phosphoethanolamine + (9Z)-octadecenoyl-CoA = 1-hexadecanoyl-2-(9Z-octadecenoyl)-sn-glycero-3-phosphoethanolamine + CoA. The catalysed reaction is 1-(10Z-heptadecenoyl)-sn-glycero-3-phosphoethanolamine + hexadecanoyl-CoA = 1-(10Z-heptadecenoyl)-2-hexadecanoyl-sn-glycero-3-phosphoethanolamine + CoA. The enzyme catalyses 1-(10Z-heptadecenoyl)-sn-glycero-3-phosphoethanolamine + (9Z)-octadecenoyl-CoA = 1-(10Z-heptadecenoyl)-2-(9Z-octadecenoyl)-sn-glycero-3-phosphoethanolamine + CoA. Its pathway is lipid metabolism; phospholipid metabolism. With respect to regulation, partially inhibited by thimerosal. Its function is as follows. Acyltransferase which catalyzes the transfer of an acyl group from an acyl-CoA towards a lysophospholipid producing a phospholipid and participates in the reacylation step of the phospholipid remodeling pathway also known as the Lands cycle. Acts on lysophosphatidylserine (1-acyl-2-hydroxy-sn-glycero-3-phospho-L-serine or LPS) and lysophosphatidylethanolamine (1-acyl-sn-glycero-3-phosphoethanolamine or LPE), and to a lesser extend lysophosphatidylcholine. Prefers oleoyl-CoA as the acyl donor and 1-oleoyl-LPE as acceptor. May play a role in neurite outgrowth during neuronal differentiation. This chain is Membrane-bound glycerophospholipid O-acyltransferase 1, found in Homo sapiens (Human).